Consider the following 626-residue polypeptide: DNA polymerase 2 (626 aa).

It belongs to the DNA polymerase type-B family.

It catalyses the reaction DNA(n) + a 2'-deoxyribonucleoside 5'-triphosphate = DNA(n+1) + diphosphate. This polymerase is devoid of exonuclease activity. This Saccharolobus solfataricus (strain ATCC 35092 / DSM 1617 / JCM 11322 / P2) (Sulfolobus solfataricus) protein is DNA polymerase 2 (dpo2).